The primary structure comprises 724 residues: Probable serine/threonine-protein kinase KKQ8 (724 aa).

Disordered stretches follow at residues 1 to 81 and 93 to 188; these read MVMQ…RQRS and HPFR…KDIL. Ser-19 bears the Phosphoserine mark. The segment covering 45 to 54 has biased composition (low complexity); it reads PYRSSSTSPK. The span at 95 to 106 shows a compositional bias: polar residues; it reads FRQTGSGASNSP. A compositionally biased stretch (low complexity) spans 143-162; sequence RSSSVSSCDSSNGTTSSSDS. Residues Ser-232, Ser-238, and Ser-241 each carry the phosphoserine modification. Polar residues-rich tracts occupy residues 318-329 and 338-351; these read NASSLLPNVEKS and GQSP…SPTQ. Positions 318 to 355 are disordered; that stretch reads NASSLLPNVEKSQTNHEKRTGQSPNDSNRSSPTQGRED. Positions 412–712 constitute a Protein kinase domain; that stretch reads GHPVGLVGAG…VGKLLDMQWM (301 aa). Residues 418-426 and Lys-455 contribute to the ATP site; that span reads VGAGAYGEV. Asp-563 functions as the Proton acceptor in the catalytic mechanism.

The protein belongs to the protein kinase superfamily. CAMK Ser/Thr protein kinase family. NPR/HAL subfamily. HAL5 sub-subfamily.

The protein resides in the cytoplasm. It carries out the reaction L-seryl-[protein] + ATP = O-phospho-L-seryl-[protein] + ADP + H(+). The enzyme catalyses L-threonyl-[protein] + ATP = O-phospho-L-threonyl-[protein] + ADP + H(+). In Saccharomyces cerevisiae (strain YJM789) (Baker's yeast), this protein is Probable serine/threonine-protein kinase KKQ8 (KKQ8).